We begin with the raw amino-acid sequence, 216 residues long: Redox-sensing transcriptional repressor Rex (216 aa).

The segment at residues 20-59 (QYYRLFKSLVEENVTRTNSQLISEKIGVDAATIRRDFSLF) is a DNA-binding region (H-T-H motif). 94–99 (GVGNLG) is an NAD(+) binding site.

Belongs to the transcriptional regulatory Rex family. As to quaternary structure, homodimer.

The protein localises to the cytoplasm. Its function is as follows. Modulates transcription in response to changes in cellular NADH/NAD(+) redox state. This is Redox-sensing transcriptional repressor Rex from Lactococcus lactis subsp. lactis (strain IL1403) (Streptococcus lactis).